We begin with the raw amino-acid sequence, 351 residues long: Probable inactive tRNA-specific adenosine deaminase-like protein 3 (351 aa).

At Met1 the chain carries N-acetylmethionine. Residues 1–26 (MEPAPGLVEQPKCLEAGSPEPEPAPW) are disordered. The region spanning 171–336 (AAMQSHMERA…PDLNHRFQVF (166 aa)) is the CMP/dCMP-type deaminase domain. Positions 223, 291, and 294 each coordinate Zn(2+).

This sequence belongs to the cytidine and deoxycytidylate deaminase family. ADAT3 subfamily. Zn(2+) is required as a cofactor.

This chain is Probable inactive tRNA-specific adenosine deaminase-like protein 3 (ADAT3), found in Homo sapiens (Human).